A 375-amino-acid polypeptide reads, in one-letter code: Tyrosine--tRNA ligase (375 aa).

Tyrosine 37, tyrosine 168, glutamine 172, aspartate 175, and glutamine 190 together coordinate L-tyrosine. Residues 251–255 (KMSKS) carry the 'KMSKS' region motif. Position 254 (lysine 254) interacts with ATP.

The protein belongs to the class-I aminoacyl-tRNA synthetase family. TyrS type 4 subfamily. As to quaternary structure, homodimer.

The protein localises to the cytoplasm. It carries out the reaction tRNA(Tyr) + L-tyrosine + ATP = L-tyrosyl-tRNA(Tyr) + AMP + diphosphate + H(+). In terms of biological role, catalyzes the attachment of tyrosine to tRNA(Tyr) in a two-step reaction: tyrosine is first activated by ATP to form Tyr-AMP and then transferred to the acceptor end of tRNA(Tyr). In Pyrococcus horikoshii (strain ATCC 700860 / DSM 12428 / JCM 9974 / NBRC 100139 / OT-3), this protein is Tyrosine--tRNA ligase.